The primary structure comprises 726 residues: Catalase-peroxidase (726 aa).

A disordered region spans residues 1-33 (MSTSDDIHNTTATGKCPFHQGGHDQSAGGGTTT). Positions 105 to 226 (WHGAGTYRSI…LGATEMGLIY (122 aa)) form a cross-link, tryptophyl-tyrosyl-methioninium (Trp-Tyr) (with M-252). His106 serves as the catalytic Proton acceptor. A cross-link (tryptophyl-tyrosyl-methioninium (Tyr-Met) (with W-105)) is located at residues 226-252 (YVNPEGPDHSGEPLSAAAAIRATFGNM). His267 lines the heme b pocket.

This sequence belongs to the peroxidase family. Peroxidase/catalase subfamily. As to quaternary structure, homodimer or homotetramer. Heme b is required as a cofactor. In terms of processing, formation of the three residue Trp-Tyr-Met cross-link is important for the catalase, but not the peroxidase activity of the enzyme.

The catalysed reaction is H2O2 + AH2 = A + 2 H2O. It catalyses the reaction 2 H2O2 = O2 + 2 H2O. Its function is as follows. Bifunctional enzyme with both catalase and broad-spectrum peroxidase activity. The chain is Catalase-peroxidase from Escherichia coli (strain UTI89 / UPEC).